The sequence spans 338 residues: 1-aminocyclopropane-1-carboxylate deaminase (338 aa).

Lysine 51 carries the N6-(pyridoxal phosphate)lysine modification. Residue serine 78 is the Nucleophile of the active site.

The protein belongs to the ACC deaminase/D-cysteine desulfhydrase family. As to quaternary structure, homotrimer. Pyridoxal 5'-phosphate is required as a cofactor.

It carries out the reaction 1-aminocyclopropane-1-carboxylate + H2O = 2-oxobutanoate + NH4(+). Catalyzes a cyclopropane ring-opening reaction, the irreversible conversion of 1-aminocyclopropane-1-carboxylate (ACC) to ammonia and alpha-ketobutyrate. Allows growth on ACC as a nitrogen source. This chain is 1-aminocyclopropane-1-carboxylate deaminase, found in Ralstonia nicotianae (strain ATCC BAA-1114 / GMI1000) (Ralstonia solanacearum).